The chain runs to 386 residues: Heat-inducible transcription repressor HrcA (386 aa).

It belongs to the HrcA family.

Negative regulator of class I heat shock genes (grpE-dnaK-dnaJ and groELS operons). Prevents heat-shock induction of these operons. The chain is Heat-inducible transcription repressor HrcA from Chlamydia caviae (strain ATCC VR-813 / DSM 19441 / 03DC25 / GPIC) (Chlamydophila caviae).